The following is a 319-amino-acid chain: MTSIAFCNAFTVNPFLAAARRSPPPLTPLTSVALSPARKPRILAIFHPRTFPSFRVQAIAEDEWESEKKTLKGVVGSVALAEDEKTGADLVVSDLKKKLIDQLFGTDRGLKATSETRAEVNELITQLEAKNPNPAPTEALSLLNGKWILAYTSFVGLFPLLGAESLQQLLKVDEISQTIDSEGFTVQNSVRFVGPFSSTSVTTNAKFEVRSPKRVQIKFEEGIIGTPQLTDSIVIPDKVEFFGQNIDLSPFKGVISSLQDTASSVAKTISSQPPIKFPISNSNAQSWLLTTYLDDELRISRADGGSVFVLILESSPLLT.

A chromoplast-targeting transit peptide spans 1 to 55 (MTSIAFCNAFTVNPFLAAARRSPPPLTPLTSVALSPARKPRILAIFHPRTFPSFR).

It belongs to the PAP/fibrillin family.

It localises to the plastid. Its subcellular location is the chromoplast. Its function is as follows. May be involved in carotenoid sequestration within chromoplasts. The sequence is that of Chromoplast-specific carotenoid-associated protein C2, chromoplastic (CHRC2) from Oncidium hybrid cultivar (Orchid).